Consider the following 175-residue polypeptide: MVSLKDSHFDLFHLPAQFALDETALDAAYRTVQTQVHPDRFAAAGDAQKRIAMQWATRANEAYRTLRDPLKRASYLLSLRGVDIGAENNTAMEPAFLMQQMEWREGIEDAAAARNVDALDALLAELRDEKRVRVERLGTLLDSGADQAAAEAVRQLMFIERVASEVGAQIERLET.

Positions 7–79 (SHFDLFHLPA…LKRASYLLSL (73 aa)) constitute a J domain.

It belongs to the HscB family. In terms of assembly, interacts with HscA and stimulates its ATPase activity.

In terms of biological role, co-chaperone involved in the maturation of iron-sulfur cluster-containing proteins. Seems to help targeting proteins to be folded toward HscA. In Burkholderia cenocepacia (strain ATCC BAA-245 / DSM 16553 / LMG 16656 / NCTC 13227 / J2315 / CF5610) (Burkholderia cepacia (strain J2315)), this protein is Co-chaperone protein HscB homolog.